The following is a 279-amino-acid chain: 1-(5-phosphoribosyl)-5-[(5-phosphoribosylamino)methylideneamino] imidazole-4-carboxamide isomerase (279 aa).

Belongs to the HisA/HisF family.

The protein localises to the cytoplasm. The enzyme catalyses 1-(5-phospho-beta-D-ribosyl)-5-[(5-phospho-beta-D-ribosylamino)methylideneamino]imidazole-4-carboxamide = 5-[(5-phospho-1-deoxy-D-ribulos-1-ylimino)methylamino]-1-(5-phospho-beta-D-ribosyl)imidazole-4-carboxamide. It participates in amino-acid biosynthesis; L-histidine biosynthesis; L-histidine from 5-phospho-alpha-D-ribose 1-diphosphate: step 4/9. The chain is 1-(5-phosphoribosyl)-5-[(5-phosphoribosylamino)methylideneamino] imidazole-4-carboxamide isomerase (HIS6) from Candida albicans (Yeast).